The following is a 423-amino-acid chain: MNLRITSSEIIKPSSPTPQNLKSYRLSIVDQLTPNVYFSIILLYTKTTENPTKTSDHLKKSLSETLTRYYPLAGQLKYDQLIVDCNDQGVPFVEADVSNHMSELLKLPNIDVLEQLLPFKPHEGFNAERSNVTVQVNYFGCGGMAIGLCFKHKVLDATTAAFFVKNWGVIARGAGEIKDVIYDQASLFPARDLSFLSKSVDEEFLKAESETKRFVFDGSAIASMREKFTHLGRRPTRFEVVSAVILGALISAAKESEEPPERLDTIISVNLRQRMVPPFPEHCLGNIISGGLIYWPLEKKLDHGSLAEEIHQSIKKVDDQFARKFYGEAEFLNLPRLGANEVVKKREFWVTSWCKTPLHQSDFGWGKPKWAGNSMRLNEITVLFDTSDGEGIEAWVGLPKKDMARFEQDATIVAYTSPNPTIL.

Catalysis depends on proton acceptor residues His-152 and Asp-362.

This sequence belongs to the plant acyltransferase family. Monomer. As to expression, mainly expressed in petioles.

It catalyses the reaction isomeliandiol + acetyl-CoA = 21-O-acetyl-isomeliandiol + CoA. It functions in the pathway secondary metabolite biosynthesis; terpenoid biosynthesis. In terms of biological role, acetyltransferase involved in the biosynthesis of limonoids triterpene natural products such as azadirachtin, an antifeedant widely used as bioinsecticide, and possessing many medicinal applications including anti-tumoral, anti-malarial, anti-rheumatic, antibacterial, anti-inflammatory, anti-pyretic and diuretic effects. Catalyzes the formation of 21-O-acetyl-isomeliandiol from isomeliandiol. This chain is Limonoid 21-O-acetyltransferse, found in Melia azedarach (Chinaberry tree).